Consider the following 673-residue polypeptide: Polyadenylate-binding protein, cytoplasmic and nuclear (673 aa).

The tract at residues 1 to 39 (MSAETATSPAPAAETPVAPAPATQTTPAEGAPTPAAAAP) is disordered. 4 consecutive RRM domains span residues 46–124 (ASLY…WSQR), 134–211 (GNIF…HHVG), 227–304 (TNVY…RAQT), and 330–407 (VNLY…LAQR). The tract at residues 300–322 (GRAQTKSEREAELKKSHEEKRLE) is disordered. The span at 304 to 322 (TKSEREAELKKSHEEKRLE) shows a compositional bias: basic and acidic residues. Disordered regions lie at residues 509 to 572 (APGY…AGRL) and 644 to 673 (WGKD…EKKE). The region spanning 569–646 (AGRLDAQSLA…ALRVLAEWGK (78 aa)) is the PABC domain.

The protein belongs to the polyadenylate-binding protein type-1 family.

The protein resides in the cytoplasm. Its subcellular location is the nucleus. Functionally, binds the poly(A) tail of mRNA. Appears to be an important mediator of the multiple roles of the poly(A) tail in mRNA biogenesis, stability and translation. In the nucleus, involved in both mRNA cleavage and polyadenylation. Is also required for efficient mRNA export to the cytoplasm. Acts in concert with a poly(A)-specific nuclease (PAN) to affect poly(A) tail shortening, which may occur concomitantly with either nucleocytoplasmic mRNA transport or translational initiation. In the cytoplasm, stimulates translation initiation and regulates mRNA decay through translation termination-coupled poly(A) shortening, probably mediated by PAN. The chain is Polyadenylate-binding protein, cytoplasmic and nuclear (PAB1) from Cryptococcus neoformans var. neoformans serotype D (strain B-3501A) (Filobasidiella neoformans).